Here is a 443-residue protein sequence, read N- to C-terminus: Transcriptional regulatory protein ZraR (443 aa).

Positions 7–121 (DILVVDDDIS…KLQLTLSEAL (115 aa)) constitute a Response regulatory domain. 4-aspartylphosphate is present on Asp-56. The Sigma-54 factor interaction domain occupies 141–370 (MVGDSPAMRA…LENAVERAVV (230 aa)). 4 residues coordinate ATP: Gly-172, Thr-173, Arg-329, and Arg-359. The segment at residues 423-442 (KTEAARRLGITRKTLLAKLS) is a DNA-binding region (H-T-H motif).

In terms of processing, phosphorylated by ZraS.

It is found in the cytoplasm. With respect to regulation, activity of the ZraS/ZraR two-component system is repressed by the zinc-bound form of ZraP, which probably interacts with the periplasmic region of ZraS. Its function is as follows. Part of the Zra signaling pathway, an envelope stress response (ESR) system composed of the periplasmic accessory protein ZraP, the histidine kinase ZraS and the transcriptional regulator ZraR. The ZraPSR system contributes to antibiotic resistance and is important for membrane integrity in the presence of membrane-targeting biocides. ZraR is a member of the two-component regulatory system ZraS/ZraR. When activated by ZraS, acts in conjunction with sigma-54 to regulate the expression of zraP in the presence of high Zn(2+) or Pb(2+) concentrations. Also positively autoregulates the expression of the zraSR operon. The sequence is that of Transcriptional regulatory protein ZraR (zraR) from Klebsiella oxytoca.